Reading from the N-terminus, the 271-residue chain is 3-methyl-2-oxobutanoate hydroxymethyltransferase 1 (271 aa).

Mg(2+) contacts are provided by Asp-53 and Asp-92. 3-methyl-2-oxobutanoate is bound by residues 53 to 54 (DS), Asp-92, and Lys-120. Glu-122 contacts Mg(2+). The active-site Proton acceptor is Glu-189.

The protein belongs to the PanB family. In terms of assembly, homodecamer; pentamer of dimers. The cofactor is Mg(2+).

The protein resides in the cytoplasm. It catalyses the reaction 3-methyl-2-oxobutanoate + (6R)-5,10-methylene-5,6,7,8-tetrahydrofolate + H2O = 2-dehydropantoate + (6S)-5,6,7,8-tetrahydrofolate. Its pathway is cofactor biosynthesis; (R)-pantothenate biosynthesis; (R)-pantoate from 3-methyl-2-oxobutanoate: step 1/2. Catalyzes the reversible reaction in which hydroxymethyl group from 5,10-methylenetetrahydrofolate is transferred onto alpha-ketoisovalerate to form ketopantoate. In Burkholderia cenocepacia (strain HI2424), this protein is 3-methyl-2-oxobutanoate hydroxymethyltransferase 1.